Here is a 1066-residue protein sequence, read N- to C-terminus: Isoleucine--tRNA ligase (1066 aa).

The 'HIGH' region signature appears at 49–59; that stretch reads PYVSGAIHLGT. The 'KMSKS' region motif lies at 625–629; the sequence is KMSKS. Residue K628 coordinates ATP.

The protein belongs to the class-I aminoacyl-tRNA synthetase family. IleS type 2 subfamily. Monomer. It depends on Zn(2+) as a cofactor.

The protein localises to the cytoplasm. The catalysed reaction is tRNA(Ile) + L-isoleucine + ATP = L-isoleucyl-tRNA(Ile) + AMP + diphosphate. Its function is as follows. Catalyzes the attachment of isoleucine to tRNA(Ile). As IleRS can inadvertently accommodate and process structurally similar amino acids such as valine, to avoid such errors it has two additional distinct tRNA(Ile)-dependent editing activities. One activity is designated as 'pretransfer' editing and involves the hydrolysis of activated Val-AMP. The other activity is designated 'posttransfer' editing and involves deacylation of mischarged Val-tRNA(Ile). This chain is Isoleucine--tRNA ligase, found in Pyrococcus furiosus (strain ATCC 43587 / DSM 3638 / JCM 8422 / Vc1).